The primary structure comprises 839 residues: Flocculation protein FLO11 (839 aa).

An N-terminal signal peptide occupies residues Met1 to Gly22. A Flo11 1 domain is found at Ser24–Val194. Disulfide bonds link Cys28/Cys188, Cys37/Cys167, Cys129/Cys192, and Cys143/Cys152. N-linked (GlcNAc...) asparagine glycosylation is present at Asn79. The segment at Lys187–Ser342 is disordered. Acidic residues predominate over residues Thr198–Glu317. Residues Glu332–Val502 enclose the Flo11 2 domain. Asn387 carries N-linked (GlcNAc...) asparagine glycosylation. The segment at Cys496–Asp606 is disordered. The span at Thr506 to Thr592 shows a compositional bias: acidic residues. A compositionally biased stretch (low complexity) spans Thr593–Asp606.

The protein belongs to the flocculin family. Highly divergent.

Homophilic binding protein that enables kin discrimination in heterogeneous yeast populations by mediating homotypic cell-cell interactions during flocculation, a reversible and asexual process in which cells adhere to form aggregates (flocs). The chain is Flocculation protein FLO11 from Komagataella phaffii (strain GS115 / ATCC 20864) (Yeast).